Reading from the N-terminus, the 205-residue chain is Thiamine-phosphate synthase (205 aa).

4-amino-2-methyl-5-(diphosphooxymethyl)pyrimidine contacts are provided by residues 37–41 (QVREK) and asparagine 69. Mg(2+) is bound by residues aspartate 70 and aspartate 89. A 4-amino-2-methyl-5-(diphosphooxymethyl)pyrimidine-binding site is contributed by serine 108. 134-136 (TGS) lines the 2-[(2R,5Z)-2-carboxy-4-methylthiazol-5(2H)-ylidene]ethyl phosphate pocket. Lysine 137 serves as a coordination point for 4-amino-2-methyl-5-(diphosphooxymethyl)pyrimidine. 2-[(2R,5Z)-2-carboxy-4-methylthiazol-5(2H)-ylidene]ethyl phosphate is bound by residues glycine 165 and 185-186 (IS).

This sequence belongs to the thiamine-phosphate synthase family. Mg(2+) is required as a cofactor.

It carries out the reaction 2-[(2R,5Z)-2-carboxy-4-methylthiazol-5(2H)-ylidene]ethyl phosphate + 4-amino-2-methyl-5-(diphosphooxymethyl)pyrimidine + 2 H(+) = thiamine phosphate + CO2 + diphosphate. The enzyme catalyses 2-(2-carboxy-4-methylthiazol-5-yl)ethyl phosphate + 4-amino-2-methyl-5-(diphosphooxymethyl)pyrimidine + 2 H(+) = thiamine phosphate + CO2 + diphosphate. The catalysed reaction is 4-methyl-5-(2-phosphooxyethyl)-thiazole + 4-amino-2-methyl-5-(diphosphooxymethyl)pyrimidine + H(+) = thiamine phosphate + diphosphate. It participates in cofactor biosynthesis; thiamine diphosphate biosynthesis; thiamine phosphate from 4-amino-2-methyl-5-diphosphomethylpyrimidine and 4-methyl-5-(2-phosphoethyl)-thiazole: step 1/1. Functionally, condenses 4-methyl-5-(beta-hydroxyethyl)thiazole monophosphate (THZ-P) and 2-methyl-4-amino-5-hydroxymethyl pyrimidine pyrophosphate (HMP-PP) to form thiamine monophosphate (TMP). This is Thiamine-phosphate synthase from Clostridium botulinum (strain Loch Maree / Type A3).